A 501-amino-acid chain; its full sequence is ATP synthase subunit alpha (501 aa).

An ATP-binding site is contributed by 169–176 (GDRQTGKT).

The protein belongs to the ATPase alpha/beta chains family. In terms of assembly, F-type ATPases have 2 components, CF(1) - the catalytic core - and CF(0) - the membrane proton channel. CF(1) has five subunits: alpha(3), beta(3), gamma(1), delta(1), epsilon(1). CF(0) has three main subunits: a(1), b(2) and c(9-12). The alpha and beta chains form an alternating ring which encloses part of the gamma chain. CF(1) is attached to CF(0) by a central stalk formed by the gamma and epsilon chains, while a peripheral stalk is formed by the delta and b chains.

It is found in the cell membrane. The enzyme catalyses ATP + H2O + 4 H(+)(in) = ADP + phosphate + 5 H(+)(out). Functionally, produces ATP from ADP in the presence of a proton gradient across the membrane. The alpha chain is a regulatory subunit. The sequence is that of ATP synthase subunit alpha from Streptococcus pneumoniae (strain Hungary19A-6).